The following is a 622-amino-acid chain: MSTDNKQSLPAITLAAIGVVYGDIGTSPLYTLRECLSGQFGFGVERDAVFGFLSLIFWLLIFVVSIKYLTFVMRADNAGEGGILTLMSLAGRNTSARTTSMLVIMGLIGGSFFYGEVVITPAISVMSAIEGLEIVAPQLDTWIVPLSIIVLTLLFMIQKHGTAMVGKLFAPIMLTWFLILAGLGLRSIIANPEVLHALNPMWAVHFFLEYKTVSFIALGAVVLSITGGEVLYADMGHFGKFSIRLAWFTVVLPSLTLNYFGQGALLLKNPEAIKNPFFLLAPDWALIPLLIIAALATVIASQAVISGVFSLTRQAVRLGYLSPMRIIHTSEMESGQIYIPFVNWMLYVAVVIVIVSFEHSSNLAAAYGIAVTGTMVLTSILSTTVARQNWHWNKYFVALILIAFLCVDIPLFTANLDKLLSGGWLPLSLGTVMFIVMTTWKSERFRLLRRMHEHGNSLEAMIASLEKSPPVRVPGTAVYMSRAINVIPFALMHNLKHNKVLHERVILLTLRTEDAPYVHNVRRVQIEQLSPTFWRVVASYGWRETPNVEEVFHRCGLEGLSCRMMETSFFMSHESLILGKRPWYLRLRGKLYLLLQRNALRAPDQFEIPPNRVIELGTQVEI.

Helical transmembrane passes span 9 to 29, 49 to 69, 103 to 123, 137 to 157, 165 to 185, 213 to 233, 247 to 267, 276 to 296, 337 to 357, 363 to 383, 396 to 416, and 419 to 439; these read LPAI…TSPL, VFGF…IKYL, VIMG…TPAI, PQLD…LFMI, VGKL…GLGL, VSFI…VLYA, WFTV…ALLL, PFFL…AALA, IYIP…IVSF, LAAA…ILST, FVAL…TANL, and LLSG…VMTT.

It belongs to the HAK/KUP transporter (TC 2.A.72) family.

It is found in the cell inner membrane. It carries out the reaction K(+)(in) + H(+)(in) = K(+)(out) + H(+)(out). In terms of biological role, responsible for the low-affinity transport of potassium into the cell. Likely operates as a K(+):H(+) symporter. This chain is Low affinity potassium transport system protein Kup, found in Shigella flexneri.